A 77-amino-acid chain; its full sequence is MASIEKRIKEIVAEQLGVDEAQVTNESSFMDDLGADSLDTVELVMALEEEFEIEISDEDAEKIQSVQDAIDYITDHT.

The Carrier domain occupies 2-77 (ASIEKRIKEI…DAIDYITDHT (76 aa)). At serine 37 the chain carries O-(pantetheine 4'-phosphoryl)serine.

It belongs to the acyl carrier protein (ACP) family. 4'-phosphopantetheine is transferred from CoA to a specific serine of apo-ACP by AcpS. This modification is essential for activity because fatty acids are bound in thioester linkage to the sulfhydryl of the prosthetic group.

It localises to the cytoplasm. It participates in lipid metabolism; fatty acid biosynthesis. Functionally, carrier of the growing fatty acid chain in fatty acid biosynthesis. The sequence is that of Acyl carrier protein from Geobacter sp. (strain M21).